The primary structure comprises 185 residues: Ribosome-recycling factor (185 aa).

Positions 135 to 159 (ANDKLKASEKNKEASEDEVKRAQEK) are disordered.

This sequence belongs to the RRF family.

Its subcellular location is the cytoplasm. Its function is as follows. Responsible for the release of ribosomes from messenger RNA at the termination of protein biosynthesis. May increase the efficiency of translation by recycling ribosomes from one round of translation to another. This Moorella thermoacetica (strain ATCC 39073 / JCM 9320) protein is Ribosome-recycling factor.